The sequence spans 476 residues: Tryptophan--tRNA ligase, cytoplasmic (476 aa).

The dispensable to the catalytic activity stretch occupies residues 1 to 117 (MADMSNGEQG…LIVRFGSSKI (117 aa)). One can recognise a WHEP-TRS domain in the interval 13–69 (SPLELFHSIAAQGELVRDLKARNAAKDEIDSAVKMLLSLKTSYKAATGEDYKVDCPP). The tract at residues 63–83 (YKVDCPPGDPAPESGEGLDAT) is disordered. Lys159 is modified (N6-succinyllysine). Residues 169–178 (PSSEAMHVGH) carry the 'HIGH' region motif. The short motif at 354–358 (KMSAS) is the 'KMSKS' region element. Ser356 carries the post-translational modification Phosphoserine.

Belongs to the class-I aminoacyl-tRNA synthetase family. Homodimer. Interacts with oxidized form of GAPDH. Post-translationally, proteolytic cleavage generates 2 forms; T1-TrpRS and T2-TrpRS.

It is found in the cytoplasm. The catalysed reaction is tRNA(Trp) + L-tryptophan + ATP = L-tryptophyl-tRNA(Trp) + AMP + diphosphate + H(+). In terms of biological role, T1-TrpRS has aminoacylation activity while T2-TrpRS lacks it. T1-TrpRS and T2-TrpRS possess angiostatic activity. T2-TrpRS inhibits fluid shear stress-activated responses of endothelial cells. Regulates ERK, Akt, and eNOS activation pathways that are associated with angiogenesis, cytoskeletal reorganization and shear stress-responsive gene expression. The protein is Tryptophan--tRNA ligase, cytoplasmic (WARS1) of Bos taurus (Bovine).